The primary structure comprises 511 residues: Maturase K (511 aa).

Belongs to the intron maturase 2 family. MatK subfamily.

It is found in the plastid. The protein resides in the chloroplast. Its function is as follows. Usually encoded in the trnK tRNA gene intron. Probably assists in splicing its own and other chloroplast group II introns. In Hordeum vulgare subsp. spontaneum (Wild barley), this protein is Maturase K.